The sequence spans 359 residues: Histidinol-phosphate aminotransferase (359 aa).

Lys-217 is subject to N6-(pyridoxal phosphate)lysine.

Belongs to the class-II pyridoxal-phosphate-dependent aminotransferase family. Histidinol-phosphate aminotransferase subfamily. Homodimer. The cofactor is pyridoxal 5'-phosphate.

It catalyses the reaction L-histidinol phosphate + 2-oxoglutarate = 3-(imidazol-4-yl)-2-oxopropyl phosphate + L-glutamate. It participates in amino-acid biosynthesis; L-histidine biosynthesis; L-histidine from 5-phospho-alpha-D-ribose 1-diphosphate: step 7/9. The chain is Histidinol-phosphate aminotransferase from Salmonella arizonae (strain ATCC BAA-731 / CDC346-86 / RSK2980).